A 120-amino-acid polypeptide reads, in one-letter code: uncharacterized protein (120 aa).

A helical transmembrane segment spans residues 8-28; that stretch reads LIVKWFVGLMLIMMMVAVSLF.

It is found in the membrane. This is an uncharacterized protein from Bacillus anthracis.